The sequence spans 350 residues: WD repeat-containing protein DWA2 (350 aa).

6 WD repeats span residues 39-79 (KEEN…FDQR), 118-158 (AHVG…KSAE), 166-205 (GMRH…KNNS), 206-246 (IERA…FPVQ), 250-290 (GHTH…EHKT), and 311-350 (DYED…LPRR).

Interacts with ABI5 and DDB1A and DWA1.

It localises to the nucleus. It participates in protein modification; protein ubiquitination. Component of the CUL4-RBX1-DDB1-DWA1/DWA2 E3 ubiquitin-protein ligase complex that acts as a negative regulator in abscisic acid (ABA) signaling. May function as the substrate recognition module within this complex leading to ABI5 degradation. Functionally redundant with DWA1. This Arabidopsis thaliana (Mouse-ear cress) protein is WD repeat-containing protein DWA2 (DWA2).